A 624-amino-acid polypeptide reads, in one-letter code: Ferredoxin-fold anticodon-binding domain-containing protein 1 (624 aa).

Residues 531–624 (LYPPCYVHDV…IQQHLYVIPR (94 aa)) form the FDX-ACB domain.

The chain is Ferredoxin-fold anticodon-binding domain-containing protein 1 (FDXACB1) from Homo sapiens (Human).